Consider the following 292-residue polypeptide: Elongation factor Ts (292 aa).

Residues 81–84 (TDFV) form an involved in Mg(2+) ion dislocation from EF-Tu region.

The protein belongs to the EF-Ts family.

The protein localises to the cytoplasm. Functionally, associates with the EF-Tu.GDP complex and induces the exchange of GDP to GTP. It remains bound to the aminoacyl-tRNA.EF-Tu.GTP complex up to the GTP hydrolysis stage on the ribosome. The polypeptide is Elongation factor Ts (Acidithiobacillus ferrooxidans (strain ATCC 23270 / DSM 14882 / CIP 104768 / NCIMB 8455) (Ferrobacillus ferrooxidans (strain ATCC 23270))).